We begin with the raw amino-acid sequence, 232 residues long: tRNA (guanine-N(1)-)-methyltransferase (232 aa).

S-adenosyl-L-methionine contacts are provided by residues Gly112 and 132–137 (IGDYIL).

Belongs to the RNA methyltransferase TrmD family. As to quaternary structure, homodimer.

It localises to the cytoplasm. It carries out the reaction guanosine(37) in tRNA + S-adenosyl-L-methionine = N(1)-methylguanosine(37) in tRNA + S-adenosyl-L-homocysteine + H(+). Functionally, specifically methylates guanosine-37 in various tRNAs. The chain is tRNA (guanine-N(1)-)-methyltransferase from Methylacidiphilum infernorum (isolate V4) (Methylokorus infernorum (strain V4)).